Reading from the N-terminus, the 656-residue chain is MFKLVSDYEPTGDQPQAIDRLVEGIKKGYRFQTLIGVTGSGKTFTMANVISRLNRPALVISPNKTLAAQLYGEFKTFFPHNRVEYFISYYDYYQPEAYVPTKDLYIEKNADINDVLVRMRMSALKSVRTRRDVVVVASVSSIYASGDPSDFDRMNIQLSTGLKISPHAVAQHLAKIGYERSNEITVKGCFRLRGDVLEIYPTYQDEGIRIEFFGSVVDRIETFDKLNRSPLEELQKIIIYPAIEFVTTEEKLKRAVESIKNELDQRLTELKNQGKILEAQRLQQRTMHDLELLSALGYCPGIENYSRHFDGRKPGEPPYTLLDYFDDDVLVFLDESHIAVPQLRAMWRGEHSRKKSLVEYGFRLPSAFDNRPLTFEEFLKKVPQIIFVSATPGPFEYQVSEQIVEQIIRPTGLIDPEVEVRPTKYQVDDLISEIKKVVERGERALITVLTKKTAEKLSEYLVEMGIKSLYIHSELDAIERIEVLKKLRRGDVDAVVGINLLREGLDLPEVSLVAILDSDKEGFLRSETTLIQIIGRVARNLNGKVLMYADRVTPAMQRAIDETNRRRKIQMEYNEKYGITPKTIVKPLQIEIFEKFMEKPEIDYHQLAKDLSKEEYLSLLEEEMYRAASELRYEDAAKLRDEIFRLREELKDENYL.

Residues 23 to 180 (EGIKKGYRFQ…QHLAKIGYER (158 aa)) form the Helicase ATP-binding domain. 36–43 (GVTGSGKT) contributes to the ATP binding site. The Beta-hairpin signature appears at 89–112 (YYDYYQPEAYVPTKDLYIEKNADI). A Helicase C-terminal domain is found at 426–588 (QVDDLISEIK…ITPKTIVKPL (163 aa)). In terms of domain architecture, UVR spans 614 to 649 (EEYLSLLEEEMYRAASELRYEDAAKLRDEIFRLREE).

This sequence belongs to the UvrB family. Forms a heterotetramer with UvrA during the search for lesions. Interacts with UvrC in an incision complex.

It localises to the cytoplasm. The UvrABC repair system catalyzes the recognition and processing of DNA lesions. A damage recognition complex composed of 2 UvrA and 2 UvrB subunits scans DNA for abnormalities. Upon binding of the UvrA(2)B(2) complex to a putative damaged site, the DNA wraps around one UvrB monomer. DNA wrap is dependent on ATP binding by UvrB and probably causes local melting of the DNA helix, facilitating insertion of UvrB beta-hairpin between the DNA strands. Then UvrB probes one DNA strand for the presence of a lesion. If a lesion is found the UvrA subunits dissociate and the UvrB-DNA preincision complex is formed. This complex is subsequently bound by UvrC and the second UvrB is released. If no lesion is found, the DNA wraps around the other UvrB subunit that will check the other stand for damage. In Pseudothermotoga lettingae (strain ATCC BAA-301 / DSM 14385 / NBRC 107922 / TMO) (Thermotoga lettingae), this protein is UvrABC system protein B.